The primary structure comprises 145 residues: RING-H2 finger protein ATL18 (145 aa).

A signal peptide spans 1 to 29 (MISMLFPRSPLCTAAIVFYTCVCIPLGRL). An RING-type; atypical zinc finger spans residues 62-105 (CPICLVEFEAEDAVTHLPRCAHLFHINCIEPWLLRGHLTCPLCR). A helical membrane pass occupies residues 125 to 145 (STLYLSIFFFFCIFLHLLGYL).

It belongs to the RING-type zinc finger family. ATL subfamily.

It is found in the membrane. It carries out the reaction S-ubiquitinyl-[E2 ubiquitin-conjugating enzyme]-L-cysteine + [acceptor protein]-L-lysine = [E2 ubiquitin-conjugating enzyme]-L-cysteine + N(6)-ubiquitinyl-[acceptor protein]-L-lysine.. The protein operates within protein modification; protein ubiquitination. The sequence is that of RING-H2 finger protein ATL18 (ATL18) from Arabidopsis thaliana (Mouse-ear cress).